The sequence spans 2055 residues: Protein PHOTOPERIOD-INDEPENDENT EARLY FLOWERING 1 (2055 aa).

The segment at 1–47 (MASKGGKSKPDIVMASKSGKSKPDNESRAKRQKTLEAPKEPRRPKTH) is disordered. Positions 21 to 47 (SKPDNESRAKRQKTLEAPKEPRRPKTH) are enriched in basic and acidic residues. A Nuclear localization signal 1 motif is present at residues 29-36 (AKRQKTLE). Residues 35 to 107 (LEAPKEPRRP…EEQRLRKVAL (73 aa)) form the HSA domain. 2 coiled-coil regions span residues 78–147 (LRAS…LEFL) and 229–250 (EEDE…LQNE). Disordered regions lie at residues 183 to 332 (KSDE…SNDS) and 340 to 359 (ETHS…KSRK). Over residues 208 to 230 (ELDEDYDLKSEDETEDDEDTIEE) the composition is skewed to acidic residues. Basic and acidic residues-rich tracts occupy residues 231 to 243 (DEKH…RQEE) and 267 to 276 (VSRETSPVKD). Residues 392–416 (EEELAKADNEDHVEEIALLQKESEM) are a coiled coil. A disordered region spans residues 432–461 (KDISEDESESSFAVSEDSIVDSDENRQQAD). The 166-residue stretch at 548 to 713 (VTMYEKKLNG…WSLMHFLMPH (166 aa)) folds into the Helicase ATP-binding domain. 561 to 568 (DEMGLGKT) is an ATP binding site. Residues 664-667 (DEAH) carry the DEAH box motif. A Helicase C-terminal domain is found at 1076–1229 (KLQELAMLLR…NLVIQNGEYN (154 aa)). The segment at 1293–1313 (EEAVDNQEFTEEPVERPEDDE) is disordered. A coiled-coil region spans residues 1419-1492 (FEEKEWELDH…EREAAEVAEM (74 aa)). Short sequence motifs (nuclear localization signal) lie at residues 1506 to 1513 (KKKKKAKK) and 1570 to 1577 (KKRDLIVD). Residues 1577-1597 (DTDEEKTSKKKAKKHKKSLPN) are disordered. A compositionally biased stretch (basic residues) spans 1584–1594 (SKKKAKKHKKS). In terms of domain architecture, Myb-like spans 1673 to 1727 (SWLPQEDAILCAMVHEYGPNWNFVSGTLYGMTAGGAYRGRYRHPAYCCERYRELI). 2 disordered regions span residues 1843–1864 (ALQD…LQET) and 1951–1977 (KSRT…STKS). Polar residues predominate over residues 1844 to 1864 (LQDSGPSQPDNTISRSRLQET). A coiled-coil region spans residues 2006–2029 (GDREEEEEQEVDEKANSAEIEMIS).

It belongs to the SNF2/RAD54 helicase family. SWR1 subfamily. As to quaternary structure, component of the SWR1 chromatin-remodeling complex composed of at least ARP6/ESD1/SUF3, PIE1, SWC6, SWC2 and H2AZs (HTA8, HTA9, HTA11). Interacts (via c-terminus) with SWC6 and ARP6 and (via N-terminus) with H2AZs. Expressed in ovules, but not in stamens.

The protein localises to the nucleus. It catalyses the reaction ATP + H2O = ADP + phosphate + H(+). Functionally, component of the SWR1 complex which mediates the ATP-dependent exchange of histone H2A for the H2A variant H2A.F/Z leading to transcriptional regulation of selected genes (e.g. FLC) by chromatin remodeling. Probable DNA-dependent ATPase. Not involved in the repression of FLC in gametophytes, but required for the reactivation of FLC in early embryos and for the maintenance of full activation of FLC in late embryos. This chain is Protein PHOTOPERIOD-INDEPENDENT EARLY FLOWERING 1 (PIE1), found in Arabidopsis thaliana (Mouse-ear cress).